A 206-amino-acid chain; its full sequence is Pyrrolidone-carboxylate peptidase (206 aa).

Catalysis depends on residues glutamate 78, cysteine 141, and histidine 165.

This sequence belongs to the peptidase C15 family. In terms of assembly, homotetramer.

The protein localises to the cytoplasm. It carries out the reaction Release of an N-terminal pyroglutamyl group from a polypeptide, the second amino acid generally not being Pro.. In terms of biological role, removes 5-oxoproline from various penultimate amino acid residues except L-proline. The polypeptide is Pyrrolidone-carboxylate peptidase (Thermococcus kodakarensis (strain ATCC BAA-918 / JCM 12380 / KOD1) (Pyrococcus kodakaraensis (strain KOD1))).